The chain runs to 471 residues: Alpha-galactosidase 1 (471 aa).

Positions 1–18 (MFAFYFLTACISLKGVFG) are cleaved as a signal peptide. A disulfide bridge links C42 with C74. Residues D72 and D73 each coordinate substrate. Residue N105 is glycosylated (N-linked (GlcNAc...) asparagine). The cysteines at positions 121 and 151 are disulfide-linked. A substrate-binding site is contributed by K147. The active-site Nucleophile is the D149. N-linked (GlcNAc...) asparagine glycosylation is present at N175. R205 contacts substrate. D209 acts as the Proton donor in catalysis. Disulfide bonds link C221–C237 and C223–C230. Residue Q251 participates in substrate binding. N-linked (GlcNAc...) asparagine glycosylation is found at N270, N370, N403, N413, N422, N435, and N454.

The protein belongs to the glycosyl hydrolase 27 family. Homotetramer.

The protein resides in the secreted. The enzyme catalyses Hydrolysis of terminal, non-reducing alpha-D-galactose residues in alpha-D-galactosides, including galactose oligosaccharides, galactomannans and galactolipids.. This Saccharomyces cerevisiae (Baker's yeast) protein is Alpha-galactosidase 1 (MEL1).